Consider the following 308-residue polypeptide: Putative S-adenosyl-L-methionine-dependent methyltransferase Mb3816c (308 aa).

S-adenosyl-L-methionine contacts are provided by residues D131 and 160–161 (DL).

This sequence belongs to the UPF0677 family.

Exhibits S-adenosyl-L-methionine-dependent methyltransferase activity. The sequence is that of Putative S-adenosyl-L-methionine-dependent methyltransferase Mb3816c from Mycobacterium bovis (strain ATCC BAA-935 / AF2122/97).